The sequence spans 104 residues: Large ribosomal subunit protein uL24 (104 aa).

This sequence belongs to the universal ribosomal protein uL24 family. In terms of assembly, part of the 50S ribosomal subunit.

One of two assembly initiator proteins, it binds directly to the 5'-end of the 23S rRNA, where it nucleates assembly of the 50S subunit. Its function is as follows. One of the proteins that surrounds the polypeptide exit tunnel on the outside of the subunit. This is Large ribosomal subunit protein uL24 from Caulobacter vibrioides (strain ATCC 19089 / CIP 103742 / CB 15) (Caulobacter crescentus).